A 121-amino-acid chain; its full sequence is UPF0102 protein Dhaf_3740 (121 aa).

This sequence belongs to the UPF0102 family.

The protein is UPF0102 protein Dhaf_3740 of Desulfitobacterium hafniense (strain DSM 10664 / DCB-2).